The following is a 687-amino-acid chain: Guanine-nucleotide exchange factor YEL1 (687 aa).

Over residues 14–27 the composition is skewed to polar residues; the sequence is YGVSQKGYNDNFSE. Disordered regions lie at residues 14–35 and 63–97; these read YGVS…LHGS and AAND…TDQN. The region spanning 57–264 is the SEC7 domain; it reads ILQNKEAAND…SEYYKTLNET (208 aa). The segment covering 73–83 has biased composition (low complexity); it reads TTDTATAGTGT. Position 290 is a phosphothreonine (Thr-290). 2 positions are modified to phosphoserine: Ser-293 and Ser-299. A PH domain is found at 412–551; it reads ASRRTSLSYL…DCINFWAGRI (140 aa).

This sequence belongs to the YEL1 family.

The protein resides in the cytoplasm. It localises to the cell membrane. Its subcellular location is the bud neck. It is found in the bud tip. Its function is as follows. Guanine nucleotide exchange factor for ARF3 required for localization of ARF3 to the bud neck and tip and involved in actin patch polarization. The chain is Guanine-nucleotide exchange factor YEL1 (YEL1) from Saccharomyces cerevisiae (strain RM11-1a) (Baker's yeast).